A 607-amino-acid chain; its full sequence is Karyogamy meiotic segregation protein 1 (607 aa).

The interval 83-135 (DDSFANQAEKPSMEQQNSKNSIKEDANEHSVNSAHSKSSSNASPESLNPSQMM) is disordered. The segment covering 111 to 132 (HSVNSAHSKSSSNASPESLNPS) has biased composition (low complexity).

Interacts with mcp1 and sad1.

Its subcellular location is the cytoplasm. It localises to the cytoskeleton. It is found in the microtubule organizing center. The protein localises to the spindle pole body. Functionally, has a role in karyogamy, recombination and segregation during meiosis. Although it has been shown to associate with the spindle pole body it is unlikely to be involved in its formation or maintenance. The polypeptide is Karyogamy meiotic segregation protein 1 (kms1) (Schizosaccharomyces pombe (strain 972 / ATCC 24843) (Fission yeast)).